Consider the following 458-residue polypeptide: MSAGKIVQIIGAVIDVEFPENAVPKVYDALKVAEGGLTLEVQQQLGGGIVRCIAMGSSDGLKRGLSVSNTGKPISVPVGTKTLGRIMNVLGEPVDEQGPIGAEEEWAIHREAPSYEEQSNSTELLETGIKVIDLICPFAKGGKVGLFGGAGVGKTVNMMELIRNIAIEHSGFSVFAGVGERTREGNDFYHEMTDSNVLDKVSLVYGQMNEPPGNRLRVALTGLTMAEKFRDEGRDVLFFVDNIYRYTLAGTEVSALLGRMPSAVGYQPTLAEEMGVLQERITSTKTGSITSVQAVYVPADDLTDPSPATTFAHLDSTVVLSRNIASLGIYPAVDPLDSTSRQLDPQVVGQEHYDVARGVQGILQRYKELKDIIAILGMDELSEDDKLVVARARKIERFLSQPFFVAEVFTGSPGKYVSLKDTIRGFKGILEGEYDHIPEQAFYMVGSIEEVVEKAKNM.

148 to 155 (GGAGVGKT) lines the ATP pocket.

The protein belongs to the ATPase alpha/beta chains family. In terms of assembly, F-type ATPases have 2 components, CF(1) - the catalytic core - and CF(0) - the membrane proton channel. CF(1) has five subunits: alpha(3), beta(3), gamma(1), delta(1), epsilon(1). CF(0) has three main subunits: a(1), b(2) and c(9-12). The alpha and beta chains form an alternating ring which encloses part of the gamma chain. CF(1) is attached to CF(0) by a central stalk formed by the gamma and epsilon chains, while a peripheral stalk is formed by the delta and b chains.

It localises to the cell inner membrane. The enzyme catalyses ATP + H2O + 4 H(+)(in) = ADP + phosphate + 5 H(+)(out). In terms of biological role, produces ATP from ADP in the presence of a proton gradient across the membrane. The catalytic sites are hosted primarily by the beta subunits. This is ATP synthase subunit beta from Mannheimia succiniciproducens (strain KCTC 0769BP / MBEL55E).